Here is a 271-residue protein sequence, read N- to C-terminus: Regulatory protein RecX (271 aa).

This sequence belongs to the RecX family.

It is found in the cytoplasm. Its function is as follows. Modulates RecA activity. The sequence is that of Regulatory protein RecX from Lactobacillus delbrueckii subsp. bulgaricus (strain ATCC 11842 / DSM 20081 / BCRC 10696 / JCM 1002 / NBRC 13953 / NCIMB 11778 / NCTC 12712 / WDCM 00102 / Lb 14).